The sequence spans 661 residues: Heme transporter BhuA (661 aa).

The N-terminal stretch at 1–23 is a signal peptide; it reads MKFTRTLVLVSTSLLATVATSQA. Residues 48–159 form the TBDR plug domain; that stretch reads KDNIEATGGT…AAGAIRYETV (112 aa). Positions 170–661 constitute a TBDR beta-barrel domain; it reads TFGARIIGSY…TFTFQTAFKF (492 aa).

It belongs to the TonB-dependent receptor family.

Its subcellular location is the cell outer membrane. Its function is as follows. Heme transporter playing an important role in stationary-phase iron acquisition and required for maintenance of chronic infection in mice. The polypeptide is Heme transporter BhuA (bhuA) (Brucella abortus (strain 2308)).